We begin with the raw amino-acid sequence, 345 residues long: MWRGGRLSSRGVRFLETLGFACPSAVAEPPRVTSWTAFSGNQLTRNLQIKPWEFSGHRTMWLRSYRITFSCLTRLKTYRSSWKKLYSTSQTVDSKEVKTFQALAHSWWDEQGKFAPLHSMNDLRVPFIRDNLLKTSTNHDPGKPLSGMKILDVGCGGGLLTEPLGRLGASVVGIDPVAENIKIAQHHKSFDPVLDKRIQYRVCSLEETLNENAECFDAVVASEVVEHVNNLEMFIQCCYQVLKPGGSLFITTVNKTQLSYVLGIVFSEQIAGIVPKGTHTWEKFVSPEKLESILEPNGLSVETVAGMVYNPFSGYWHWTENTSLNYAAHAVRARAQEHLEPAESA.

Residues 1–86 (MWRGGRLSSR…TYRSSWKKLY (86 aa)) constitute a mitochondrion transit peptide. Position 124 (Arg-124) interacts with S-adenosyl-L-methionine. Lys-143 and Lys-149 each carry N6-acetyllysine. Residues Gly-154 and Asp-175 each contribute to the S-adenosyl-L-methionine site. The residue at position 196 (Lys-196) is an N6-acetyllysine. Position 222 (Ser-222) interacts with S-adenosyl-L-methionine. Residues Glu-223, Glu-226, and His-227 each coordinate Mg(2+).

Belongs to the class I-like SAM-binding methyltransferase superfamily. UbiG/COQ3 family. As to quaternary structure, component of a multi-subunit COQ enzyme complex, composed of at least COQ3, COQ4, COQ5, COQ6, COQ7 and COQ9. Requires Mg(2+) as cofactor.

The protein resides in the mitochondrion inner membrane. It carries out the reaction 3,4-dihydroxy-5-(all-trans-decaprenyl)benzoate + S-adenosyl-L-methionine = 4-hydroxy-3-methoxy-5-(all-trans-decaprenyl)benzoate + S-adenosyl-L-homocysteine + H(+). The enzyme catalyses a 3-demethylubiquinone + S-adenosyl-L-methionine = a ubiquinone + S-adenosyl-L-homocysteine. The catalysed reaction is 3-demethylubiquinol-10 + S-adenosyl-L-methionine = ubiquinol-10 + S-adenosyl-L-homocysteine + H(+). The protein operates within cofactor biosynthesis; ubiquinone biosynthesis. O-methyltransferase required for two non-consecutive steps during ubiquinone biosynthesis. Catalyzes the 2 O-methylation of 3,4-dihydroxy-5-(all-trans-decaprenyl)benzoic acid into 4-hydroxy-3-methoxy-5-(all-trans-decaprenyl)benzoic acid. Also catalyzes the last step of ubiquinone biosynthesis by mediating methylation of 3-demethylubiquinone into ubiquinone. Also able to mediate the methylation of 3-demethylubiquinol-10 into ubiquinol-10. This chain is Ubiquinone biosynthesis O-methyltransferase, mitochondrial, found in Rattus norvegicus (Rat).